Here is a 285-residue protein sequence, read N- to C-terminus: Cytochrome P450 monooxygenase eupD (285 aa).

The signal sequence occupies residues 1 to 19; that stretch reads MSIAGLVTTLPWLMNMLRA. C229 serves as a coordination point for heme.

Belongs to the cytochrome P450 family. The cofactor is heme.

It participates in secondary metabolite biosynthesis; terpenoid biosynthesis. In terms of biological role, cytochrome P450 monooxygenase; part of the gene cluster that mediates the biosynthesis of eupenifeldin, a bistropolone meroterpenoid that acts as an antitumor agent. The first step of eupenifeldin biosynthesis is the biosynthesis of 3-methylorcinaldehyde performed by the non-reducing polyketide synthase eupA. Oxidative dearomatization of 3-methylorcinaldehyde likely catalyzed by the FAD-dependent monooxygenase eupB is followed by oxidative ring expansion by the 2-oxoglutarate-dependent dioxygenase eupC to provide the first tropolone metabolite, tropolone stipitaldehyde. In parallel, generation of sesquiterpene alpha-humulene from farnesylpyrophosphate (FPP) is catalyzed by the terpene cyclase eupE. The cytochrome P450 monooxygenase eupD then hydroxylates humulene to humulenol. The putative Diels-Alderase eupF probably catalyzes the formation of the tropolone-humulene skeleton by linking humulenol and the polyketide moiety. The short-chain dehydrogenase/reductase eupG and the flavin-dependent monooxygenase eupH are also essential for eupenifeldin biosynthesis and are likely the additional decorating enzymes of the tropolone-humulene skeleton to produce final eupenifeldin or derivatives. This chain is Cytochrome P450 monooxygenase eupD, found in Phoma sp.